The chain runs to 178 residues: RNA pyrophosphohydrolase (178 aa).

A Nudix hydrolase domain is found at Pro18 to Ala171. A Nudix box motif is present at residues Gly59–Gly80.

The protein belongs to the Nudix hydrolase family. RppH subfamily. A divalent metal cation serves as cofactor.

In terms of biological role, accelerates the degradation of transcripts by removing pyrophosphate from the 5'-end of triphosphorylated RNA, leading to a more labile monophosphorylated state that can stimulate subsequent ribonuclease cleavage. The protein is RNA pyrophosphohydrolase of Brucella melitensis biotype 2 (strain ATCC 23457).